Here is a 237-residue protein sequence, read N- to C-terminus: Nodulation protein NolA (237 aa).

One can recognise an HTH merR-type domain in the interval 10 to 79; sequence RWRIGELAEA…LVEIRKAMEG (70 aa). A DNA-binding region (H-T-H motif) is located at residues 13 to 32; the sequence is IGELAEATGVTVRTLHHYEH.

Involved in genotype-specific nodulation of soybeans. This chain is Nodulation protein NolA (nolA), found in Bradyrhizobium diazoefficiens (strain JCM 10833 / BCRC 13528 / IAM 13628 / NBRC 14792 / USDA 110).